Consider the following 965-residue polypeptide: Probable ion channel POLLUX (965 aa).

The span at 1–11 shows a compositional bias: low complexity; that stretch reads MAESDGGEASP. Disordered regions lie at residues 1-76 and 108-158; these read MAES…APRG and GPHA…KSLA. The span at 32-42 shows a compositional bias: polar residues; the sequence is LTKSRTISGSA. Composition is skewed to low complexity over residues 52 to 66 and 118 to 149; these read SNSSSSILVRRSSTA and RSQQQTPTTTAAAAADSRSPTPAAPPQTASVS. The next 4 helical transmembrane spans lie at 187–207, 251–271, 317–337, and 369–389; these read LSPYLVLMLVVTVISFSLAIW, ADWNLASCSRMLVFAIPVFLV, LALLLATIILIASGGIALYVV, and IVSVSISSGGMLVFATMLGLV. 2 RCK N-terminal domains span residues 410–551 and 670–818; these read VNHI…ETVV and PEKI…DKSI.

It belongs to the castor/pollux (TC 1.A.1.23) family. In terms of tissue distribution, expressed in roots, leaves, stems and panicles.

The protein resides in the nucleus membrane. Required for mycorrhizal symbiosis. The chain is Probable ion channel POLLUX from Oryza sativa subsp. japonica (Rice).